A 162-amino-acid polypeptide reads, in one-letter code: uncharacterized protein (162 aa).

This sequence belongs to the LOR family.

This is an uncharacterized protein from Bacillus subtilis (strain 168).